The chain runs to 506 residues: Serine/threonine-protein kinase D6PKL1 (506 aa).

The interval Met1 to Lys96 is disordered. Over residues Glu12–Pro23 the composition is skewed to basic and acidic residues. A compositionally biased stretch (polar residues) spans Glu24–Lys54. The span at Thr55–Gln67 shows a compositional bias: basic and acidic residues. Residues Ser77–Ser92 show a composition bias toward low complexity. In terms of domain architecture, Protein kinase spans Phe123–Phe456. ATP-binding positions include Leu129–Val137 and Lys152. The active-site Proton acceptor is Asp248. The tract at residues Pro475 to Ser495 is disordered. Over residues Ser480–Ser492 the composition is skewed to low complexity.

Belongs to the protein kinase superfamily. AGC Ser/Thr protein kinase family.

The protein localises to the cell membrane. The catalysed reaction is L-seryl-[protein] + ATP = O-phospho-L-seryl-[protein] + ADP + H(+). It catalyses the reaction L-threonyl-[protein] + ATP = O-phospho-L-threonyl-[protein] + ADP + H(+). In terms of biological role, protein kinase that regulates the auxin transport activity of PIN auxin efflux facilitators by direct phosphorylation. D6PK-mediated PIN phosphorylation promotes auxin transport in the hypocotyl and this is a prerequisite for PHOT1-dependent hypocotyl bending. This Arabidopsis thaliana (Mouse-ear cress) protein is Serine/threonine-protein kinase D6PKL1 (D6PKL1).